The primary structure comprises 537 residues: Cytochrome P450 monooxygenase claR (537 aa).

A helical transmembrane segment spans residues V23–I43. Heme is bound at residue C454.

The protein belongs to the cytochrome P450 family. Heme serves as cofactor.

The protein localises to the membrane. The catalysed reaction is (2E)-geranylhydroquinone + reduced [NADPH--hemoprotein reductase] + O2 = wigandol + oxidized [NADPH--hemoprotein reductase] + 2 H2O + H(+). It participates in secondary metabolite biosynthesis; terpenoid biosynthesis. In terms of biological role, cytochrome P450 monooxygenase; part of the gene cluster that mediates the biosynthesis of clavilactone A, a meroterpenoid that features a unique benzo-fused ten-membered carbocyclic ring unit with an alpha,beta-epoxy-gamma-lactone moiety, forming an intriguing 10/5/3 tricyclic nested skeleton. ClaR, ClaS and ClaT are sufficient to produce clavilactone A. ClaR acts as a macrocyclase to catalyze the oxidative cyclization of the isopentenyl to the nonterpenoid moieties to form the benzo-fused macrocycle, leading to wigantol. The biosynthesis begins with the prenyltransferase claS that transfers geranyl pyrophosphate (GPP) to hydroquinone to produces geranylhydroquinone. The cytochrome P450 monooxygenase claR then catalyzes the diradical coupling reaction between the intramolecular hydroquinone and allyl moieties to form the benzo-fused ten-membered carbocyclic ring unit of wigantol. Finally the cytochrome P450 monooxygenase claT exquisitely and stereoselectively assembles the alpha,beta-epoxy-gamma-lactone moiety, producing clavilactone A via arnebinol A. The protein is Cytochrome P450 monooxygenase claR of Ampulloclitocybe clavipes (Club foot).